The sequence spans 171 residues: 2-C-methyl-D-erythritol 2,4-cyclodiphosphate synthase (171 aa).

Asp-8 and His-10 together coordinate a divalent metal cation. 4-CDP-2-C-methyl-D-erythritol 2-phosphate-binding positions include 8-10 and 34-35; these read DVH and HS. Residue His-42 participates in a divalent metal cation binding. Residues 56-58, 61-65, 132-135, Phe-139, and Arg-142 each bind 4-CDP-2-C-methyl-D-erythritol 2-phosphate; these read DIG, FPDTD, and TTTE.

The protein belongs to the IspF family. Homotrimer. The cofactor is a divalent metal cation.

The enzyme catalyses 4-CDP-2-C-methyl-D-erythritol 2-phosphate = 2-C-methyl-D-erythritol 2,4-cyclic diphosphate + CMP. Its pathway is isoprenoid biosynthesis; isopentenyl diphosphate biosynthesis via DXP pathway; isopentenyl diphosphate from 1-deoxy-D-xylulose 5-phosphate: step 4/6. Functionally, involved in the biosynthesis of isopentenyl diphosphate (IPP) and dimethylallyl diphosphate (DMAPP), two major building blocks of isoprenoid compounds. Catalyzes the conversion of 4-diphosphocytidyl-2-C-methyl-D-erythritol 2-phosphate (CDP-ME2P) to 2-C-methyl-D-erythritol 2,4-cyclodiphosphate (ME-CPP) with a corresponding release of cytidine 5-monophosphate (CMP). The sequence is that of 2-C-methyl-D-erythritol 2,4-cyclodiphosphate synthase from Geotalea daltonii (strain DSM 22248 / JCM 15807 / FRC-32) (Geobacter daltonii).